A 212-amino-acid polypeptide reads, in one-letter code: Large ribosomal subunit protein uL3 (212 aa).

Glutamine 153 bears the N5-methylglutamine mark.

It belongs to the universal ribosomal protein uL3 family. Part of the 50S ribosomal subunit. Forms a cluster with proteins L14 and L19. In terms of processing, methylated by PrmB.

In terms of biological role, one of the primary rRNA binding proteins, it binds directly near the 3'-end of the 23S rRNA, where it nucleates assembly of the 50S subunit. The sequence is that of Large ribosomal subunit protein uL3 from Shewanella frigidimarina (strain NCIMB 400).